A 161-amino-acid chain; its full sequence is MVAVYPGSFDPITLGHVDIIKRALSIFDELVVLITENPRKRCLFSLEERRKLVESALKNVDRVRIDVHRGLLVNYLKEHGIKVLVRGLRAVTDYEYELQMALANKKLYGELETVFLTASEEFSFVSSSLVKEVAMYGGDVTEWVTPEVARALYEKLKEGKR.

Serine 8 contributes to the substrate binding site. ATP-binding positions include 8–9 and histidine 16; that span reads SF. The substrate site is built by lysine 40, leucine 72, and arginine 86. ATP-binding positions include 87–89, glutamate 97, and 122–128; these read GLR and FSFVSSS.

Belongs to the bacterial CoaD family. In terms of assembly, homohexamer. It depends on Mg(2+) as a cofactor.

The protein resides in the cytoplasm. It carries out the reaction (R)-4'-phosphopantetheine + ATP + H(+) = 3'-dephospho-CoA + diphosphate. It functions in the pathway cofactor biosynthesis; coenzyme A biosynthesis; CoA from (R)-pantothenate: step 4/5. In terms of biological role, reversibly transfers an adenylyl group from ATP to 4'-phosphopantetheine, yielding dephospho-CoA (dPCoA) and pyrophosphate. The polypeptide is Phosphopantetheine adenylyltransferase (Thermotoga neapolitana (strain ATCC 49049 / DSM 4359 / NBRC 107923 / NS-E)).